We begin with the raw amino-acid sequence, 468 residues long: uncharacterized protein (468 aa).

The first 27 residues, Met-1–Ala-27, serve as a signal peptide directing secretion. PbH1 repeat units follow at residues Lys-125–Gly-154, Ser-156–Gly-185, Met-189–Gly-214, Ile-216–Gly-238, Val-249–Gly-283, Gly-284–Ser-305, Ala-312–Gly-334, and Asn-397–Lys-420.

It localises to the secreted. This is an uncharacterized protein from Bacillus subtilis (strain 168).